A 296-amino-acid polypeptide reads, in one-letter code: Chronophin (296 aa).

Aspartate 25 (nucleophile) is an active-site residue. Mg(2+) is bound by residues aspartate 25 and asparagine 27. Asparagine 27 serves as the catalytic Proton donor. Substrate-binding positions include serine 58–asparagine 60, histidine 182, and lysine 213. Aspartate 238 lines the Mg(2+) pocket.

Belongs to the HAD-like hydrolase superfamily. Homodimer. It depends on Mg(2+) as a cofactor. As to expression, detected in brain (at protein level).

The protein localises to the cytoplasm. Its subcellular location is the cytosol. The protein resides in the cytoskeleton. It is found in the cell projection. It localises to the ruffle membrane. The protein localises to the lamellipodium membrane. Its subcellular location is the cell membrane. The enzyme catalyses pyridoxal 5'-phosphate + H2O = pyridoxal + phosphate. It catalyses the reaction pyridoxine 5'-phosphate + H2O = pyridoxine + phosphate. The catalysed reaction is pyridoxamine + phosphate = pyridoxamine 5'-phosphate + H2O. It carries out the reaction O-phospho-L-seryl-[protein] + H2O = L-seryl-[protein] + phosphate. Functionally, functions as a pyridoxal phosphate (PLP) phosphatase, which also catalyzes the dephosphorylation of pyridoxine 5'-phosphate (PNP) and pyridoxamine 5'-phosphate (PMP), with order of substrate preference PLP &gt; PNP &gt; PMP and therefore plays a role in vitamin B6 metabolism. Also functions as a protein serine phosphatase that specifically dephosphorylates 'Ser-3' in proteins of the actin-depolymerizing factor (ADF)/cofilin family like CFL1 and DSTN. Thereby, regulates cofilin-dependent actin cytoskeleton reorganization, being required for normal progress through mitosis and normal cytokinesis. Does not dephosphorylate phosphothreonines in LIMK1. Does not dephosphorylate peptides containing phosphotyrosine. The chain is Chronophin from Bos taurus (Bovine).